Consider the following 260-residue polypeptide: Thiamine thiazole synthase (260 aa).

NAD(+) is bound by residues alanine 36, 55–56 (EQ), glycine 63, and 154–156 (HVD). Fe cation contacts are provided by aspartate 156 and histidine 171. Methionine 224 is an NAD(+) binding site. Arginine 234 is a glycine binding site.

Belongs to the THI4 family. As to quaternary structure, homooctamer; tetramer of dimers. Fe(2+) serves as cofactor.

The catalysed reaction is hydrogen sulfide + glycine + NAD(+) = ADP-5-ethyl-4-methylthiazole-2-carboxylate + nicotinamide + 3 H2O + H(+). The protein operates within cofactor biosynthesis; thiamine diphosphate biosynthesis. Functionally, involved in the biosynthesis of the thiazole moiety of thiamine. Catalyzes the conversion of NAD and glycine to adenosine diphosphate 5-(2-hydroxyethyl)-4-methylthiazole-2-carboxylate (ADT), an adenylated thiazole intermediate, using free sulfide as a source of sulfur. In Methanosarcina barkeri (strain Fusaro / DSM 804), this protein is Thiamine thiazole synthase.